A 493-amino-acid polypeptide reads, in one-letter code: Probable plastidic glucose transporter 2 (493 aa).

The segment covering 1–14 (MLGLQRETSSMYKR) has biased composition (polar residues). Positions 1–24 (MLGLQRETSSMYKRTSSRDYSPMI) are disordered. 12 consecutive transmembrane segments (helical) span residues 52–72 (LPHV…LGVV), 94–114 (LVVS…GGVA), 128–148 (LPMI…VMLL), 151–171 (FLVG…VTEV), 182–202 (SFIQ…GIPV), 211–231 (VCFW…FLCA), 293–313 (VVFI…NAVF), 329–349 (LGNI…MVLM), 356–376 (LLLL…VGAT), 392–412 (GTLV…GLLL), 424–444 (AMAF…LLFL), and 450–470 (LGPR…VMFV).

This sequence belongs to the major facilitator superfamily. Sugar transporter (TC 2.A.1.1) family.

The protein localises to the plastid. It localises to the chloroplast membrane. May be involved in the efflux of glucose towards the cytosol. The chain is Probable plastidic glucose transporter 2 from Arabidopsis thaliana (Mouse-ear cress).